The chain runs to 576 residues: Cilia- and flagella-associated protein 100 (576 aa).

The disordered stretch occupies residues 1–29 (MPIYDEASVPGTAAGRSTTDVGATAGANP). Coiled-coil stretches lie at residues 125 to 226 (IFLL…CRRY), 254 to 311 (VAEW…IMKE), and 342 to 408 (YKQL…LKDR). Disordered regions lie at residues 417-439 (TLSMGSSNAPTSSVTGSSGPGGP), 495-519 (AEKAREKDRRKVARDEKLSTQHREH), and 538-563 (TGKPLMFRSAPPQRKKVVQADDRNDE).

This sequence belongs to the CFAP100 family. In terms of assembly, interacts with FAP73; form the modifier of inner arm (MIA) complex.

It localises to the cytoplasm. Its subcellular location is the cytoskeleton. The protein resides in the flagellum axoneme. Its function is as follows. As part of MIA, a complex associated with the outer doublet microtubules of the axoneme, may play a role in ciliary/flagellar motility by regulating the assembly and the activity of axonemal inner dynein arm. The protein is Cilia- and flagella-associated protein 100 of Chlamydomonas reinhardtii (Chlamydomonas smithii).